Reading from the N-terminus, the 128-residue chain is Protein FAM229A (128 aa).

Residues 1–96 (MQSSPSTLGP…VATDQNPVRP (96 aa)) are disordered.

This sequence belongs to the FAM229 family.

The protein is Protein FAM229A (Fam229a) of Mus musculus (Mouse).